The sequence spans 501 residues: Probable cytosol aminopeptidase (501 aa).

Mn(2+) contacts are provided by lysine 268 and aspartate 273. Lysine 280 is an active-site residue. Mn(2+) contacts are provided by aspartate 291, aspartate 350, and glutamate 352. Arginine 354 is a catalytic residue.

Belongs to the peptidase M17 family. Requires Mn(2+) as cofactor.

The protein resides in the cytoplasm. It carries out the reaction Release of an N-terminal amino acid, Xaa-|-Yaa-, in which Xaa is preferably Leu, but may be other amino acids including Pro although not Arg or Lys, and Yaa may be Pro. Amino acid amides and methyl esters are also readily hydrolyzed, but rates on arylamides are exceedingly low.. The catalysed reaction is Release of an N-terminal amino acid, preferentially leucine, but not glutamic or aspartic acids.. In terms of biological role, presumably involved in the processing and regular turnover of intracellular proteins. Catalyzes the removal of unsubstituted N-terminal amino acids from various peptides. This Colwellia psychrerythraea (strain 34H / ATCC BAA-681) (Vibrio psychroerythus) protein is Probable cytosol aminopeptidase.